The primary structure comprises 52 residues: uncharacterized protein (52 aa).

A helical membrane pass occupies residues 21–40 (VAMNSYVELLFLSVPLIHIF).

It localises to the cell membrane. This is an uncharacterized protein from Bacillus subtilis (strain 168).